Reading from the N-terminus, the 139-residue chain is Large-conductance mechanosensitive channel (139 aa).

Transmembrane regions (helical) follow at residues 19–39 (VGVI…ADII), 40–60 (MPIV…LPLS), and 81–101 (GNFL…FMVI).

It belongs to the MscL family. In terms of assembly, homopentamer.

It is found in the cell inner membrane. Its function is as follows. Channel that opens in response to stretch forces in the membrane lipid bilayer. May participate in the regulation of osmotic pressure changes within the cell. The chain is Large-conductance mechanosensitive channel from Nitrobacter winogradskyi (strain ATCC 25391 / DSM 10237 / CIP 104748 / NCIMB 11846 / Nb-255).